Reading from the N-terminus, the 55-residue chain is Spermatid nuclear transition protein 1 (55 aa).

The segment covering Met1–Lys42 has biased composition (basic residues). The disordered stretch occupies residues Met1–Leu55. Phosphoserine is present on residues Ser9, Ser37, and Ser40.

Belongs to the nuclear transition protein 1 family. As to expression, testis.

It localises to the nucleus. The protein localises to the chromosome. Functionally, plays a key role in the replacement of histones to protamine in the elongating spermatids of mammals. In condensing spermatids, loaded onto the nucleosomes, where it promotes the recruitment and processing of protamines, which are responsible for histone eviction. The chain is Spermatid nuclear transition protein 1 (TNP1) from Sus scrofa (Pig).